The primary structure comprises 163 residues: Lipoprotein signal peptidase (163 aa).

Helical transmembrane passes span 11–31, 64–84, and 88–108; these read ILIA…IATT, MTFF…FFIN, and YNLF…GNFI. Active-site residues include aspartate 118 and aspartate 136. Residues 131–151 form a helical membrane-spanning segment; it reads IFNIADSSLTIGVILIIIALL.

This sequence belongs to the peptidase A8 family.

Its subcellular location is the cell membrane. The catalysed reaction is Release of signal peptides from bacterial membrane prolipoproteins. Hydrolyzes -Xaa-Yaa-Zaa-|-(S,diacylglyceryl)Cys-, in which Xaa is hydrophobic (preferably Leu), and Yaa (Ala or Ser) and Zaa (Gly or Ala) have small, neutral side chains.. It participates in protein modification; lipoprotein biosynthesis (signal peptide cleavage). Its function is as follows. This protein specifically catalyzes the removal of signal peptides from prolipoproteins. The sequence is that of Lipoprotein signal peptidase from Staphylococcus aureus (strain bovine RF122 / ET3-1).